Consider the following 488-residue polypeptide: 3-octaprenyl-4-hydroxybenzoate carboxy-lyase (488 aa).

Asn172 is a Mn(2+) binding site. Residues 175–177 (IYR), 189–191 (RWL), and 194–195 (RG) contribute to the prenylated FMN site. Glu238 provides a ligand contact to Mn(2+). Residue Asp287 is the Proton donor of the active site.

This sequence belongs to the UbiD family. Homohexamer. It depends on prenylated FMN as a cofactor. Mn(2+) serves as cofactor.

The protein resides in the cell membrane. It catalyses the reaction a 4-hydroxy-3-(all-trans-polyprenyl)benzoate + H(+) = a 2-(all-trans-polyprenyl)phenol + CO2. It functions in the pathway cofactor biosynthesis; ubiquinone biosynthesis. Catalyzes the decarboxylation of 3-octaprenyl-4-hydroxy benzoate to 2-octaprenylphenol, an intermediate step in ubiquinone biosynthesis. This is 3-octaprenyl-4-hydroxybenzoate carboxy-lyase from Pseudomonas putida (strain GB-1).